A 512-amino-acid chain; its full sequence is Solute carrier family 40 member 2 (512 aa).

Positions 1-28 (MEEETETRVFLSNEQHQEEEEEEEEEPS) are disordered. Over residues 17 to 27 (QEEEEEEEEEP) the composition is skewed to acidic residues. Transmembrane regions (helical) follow at residues 55–75 (VALY…MYGV), 105–125 (LVTQ…LLVV), 133–153 (FPVF…GVLS), 187–207 (GIDL…ISFV), 214–234 (ITFA…FISV), 310–330 (IVLP…FGTL), 343–363 (YIIG…TVLY), 376–396 (GVWS…SIWV), 405–425 (MLMA…LAVI), 442–462 (GVQN…GIIV), and 468–488 (FWML…LYTI).

The protein belongs to the ferroportin (FP) (TC 2.A.100) family. SLC40A subfamily.

It localises to the vacuole membrane. In terms of biological role, vacuolar transporter that is involved in the transport of excess nickel into the vacuole under iron deficiency, increasing cellular tolerance to nickel under iron deficiency stress response. In Arabidopsis thaliana (Mouse-ear cress), this protein is Solute carrier family 40 member 2 (IREG2).